A 95-amino-acid chain; its full sequence is Sec-independent protein translocase protein TatA (95 aa).

The chain crosses the membrane as a helical span at residues 1-21 (MFGRLGAPEIILILVVIILLF). Over residues 44–55 (AKAMKSEAKADD) the composition is skewed to basic and acidic residues. The disordered stretch occupies residues 44 to 95 (AKAMKSEAKADDAAPADPPNPEQSAAQRTIQAAPGDVTSSRPVTEPTDTTKR).

The protein belongs to the TatA/E family. The Tat system comprises two distinct complexes: a TatABC complex, containing multiple copies of TatA, TatB and TatC subunits, and a separate TatA complex, containing only TatA subunits. Substrates initially bind to the TatABC complex, which probably triggers association of the separate TatA complex to form the active translocon.

The protein localises to the cell membrane. Functionally, part of the twin-arginine translocation (Tat) system that transports large folded proteins containing a characteristic twin-arginine motif in their signal peptide across membranes. TatA could form the protein-conducting channel of the Tat system. This Streptomyces coelicolor (strain ATCC BAA-471 / A3(2) / M145) protein is Sec-independent protein translocase protein TatA.